The chain runs to 134 residues: Profilin-2 (134 aa).

C13 and C118 are oxidised to a cystine. Positions 84-100 match the Involved in PIP2 interaction motif; that stretch reads AVIRGKKGSGGITIKKT. T114 is subject to Phosphothreonine.

It belongs to the profilin family. In terms of assembly, occurs in many kinds of cells as a complex with monomeric actin in a 1:1 ratio. Phosphorylated by MAP kinases.

It is found in the cytoplasm. The protein resides in the cytoskeleton. Binds to actin and affects the structure of the cytoskeleton. At high concentrations, profilin prevents the polymerization of actin, whereas it enhances it at low concentrations. This chain is Profilin-2, found in Olea europaea (Common olive).